Reading from the N-terminus, the 386-residue chain is Protein RETICULATA-RELATED 4, chloroplastic (386 aa).

A chloroplast-targeting transit peptide spans 1–61; the sequence is MAIASCFFCV…RRVPITPVLS (61 aa). Residues 61–99 form a disordered region; the sequence is SASSGNGGSDNNGGGLSGGGGGGDGGKNDGDGHGDEDRD. The segment covering 65–85 has biased composition (gly residues); the sequence is GNGGSDNNGGGLSGGGGGGDG. Positions 86 to 99 are enriched in basic and acidic residues; sequence GKNDGDGHGDEDRD. 2 consecutive transmembrane segments (helical) span residues 201 to 221 and 273 to 293; these read VVFA…YLPA and KLFA…NAFI.

The protein belongs to the RETICULATA family.

The protein resides in the plastid. Its subcellular location is the chloroplast membrane. In terms of biological role, may play a role in leaf development. The sequence is that of Protein RETICULATA-RELATED 4, chloroplastic from Arabidopsis thaliana (Mouse-ear cress).